The chain runs to 324 residues: uncharacterized protein (324 aa).

8 helical membrane-spanning segments follow: residues 4–24 (GNKVVISWIVSIGFVGMPEFM), 63–83 (AALLLEYGWVLLVLIGLEGIL), 106–128 (ALFYGLAGAFVLRFGSLFAISFL), 132–151 (WQVQAIGAIYLLYISASHLL), 179–199 (LADIAFAVDSILAAVALAVTL), 209–229 (GLDGGQFLVILAGGIIGLVIM), 246–266 (LETAAFVIVGWVGVKLALYTL), and 282–302 (GTWKLIFWGVLAAIAVCGWFM).

This sequence belongs to the TerC family.

It localises to the cell membrane. This is an uncharacterized protein from Bacillus subtilis (strain 168).